The sequence spans 508 residues: Acetyl-coenzyme A carboxylase carboxyl transferase subunit beta, chloroplastic (508 aa).

Disordered stretches follow at residues 30–51 and 173–234; these read PIENASESKDPNRNDTDKNIQG and NSSN…SSTH. A compositionally biased stretch (basic and acidic residues) spans 35-47; the sequence is SESKDPNRNDTDK. The span at 173-219 shows a compositional bias: low complexity; it reads NSSNNNSSNENSSNENSSNENSSNENSSNDYISSSISSQSENSSQNE. Polar residues predominate over residues 220 to 234; it reads DITTSDQTIPESSTH. The 265-residue stretch at 244 to 508 folds into the CoA carboxyltransferase N-terminal domain; it reads LWVQCENCYG…LHTFFPLNQN (265 aa). Zn(2+)-binding residues include C248, C251, C267, and C270. A C4-type zinc finger spans residues 248–270; sequence CENCYGLNYKKFFKSKMHLCEQC.

The protein belongs to the AccD/PCCB family. In terms of assembly, acetyl-CoA carboxylase is a heterohexamer composed of biotin carboxyl carrier protein, biotin carboxylase and 2 subunits each of ACCase subunit alpha and ACCase plastid-coded subunit beta (accD). It depends on Zn(2+) as a cofactor.

The protein localises to the plastid. It localises to the chloroplast stroma. It carries out the reaction N(6)-carboxybiotinyl-L-lysyl-[protein] + acetyl-CoA = N(6)-biotinyl-L-lysyl-[protein] + malonyl-CoA. The protein operates within lipid metabolism; malonyl-CoA biosynthesis; malonyl-CoA from acetyl-CoA: step 1/1. Its function is as follows. Component of the acetyl coenzyme A carboxylase (ACC) complex. Biotin carboxylase (BC) catalyzes the carboxylation of biotin on its carrier protein (BCCP) and then the CO(2) group is transferred by the transcarboxylase to acetyl-CoA to form malonyl-CoA. The sequence is that of Acetyl-coenzyme A carboxylase carboxyl transferase subunit beta, chloroplastic from Lactuca sativa (Garden lettuce).